Consider the following 380-residue polypeptide: E3 ubiquitin-protein ligase PHF7 (380 aa).

Positions Met-1–Thr-23 are disordered. The segment covering His-10 to Thr-23 has biased composition (basic residues). The C2HC pre-PHD-type zinc-finger motif lies at Gly-30–Leu-68. 4 residues coordinate Zn(2+): Cys-33, Cys-36, His-58, and Cys-61. Positions Lys-67–Arg-92 are required for interaction and ubiquitination of the nucleosome core particle. The PHD-type zinc-finger motif lies at Lys-96 to Arg-145. Positions 98, 101, 110, 115, 120, 123, 141, 144, 159, 162, 178, 179, 185, 188, 203, 206, 247, 252, 272, 275, 281, 284, 296, and 299 each coordinate Zn(2+). The required for interaction with ubiquitinated UBE2D2 stretch occupies residues Ile-150–Asp-306. The segment at Cys-159–Asn-207 adopts an RING-type; degenerate zinc-finger fold. The interval Arg-243 to Leu-300 is required for association with and ubiquitination of H3. Residues Glu-352 to Ser-367 are compositionally biased toward low complexity. The tract at residues Glu-352–Lys-380 is disordered.

In terms of assembly, interacts with MEF2C; the interaction promotes MEF2C binding to its transcription targets. Interacts with GATA4; the interaction promotes GATA4 binding to its transcription targets. Interacts with UBE2D2; the interaction inhibits cleavage of PHF7 and promotes association of the complex with the nucleosome core particle.

It localises to the nucleus. The catalysed reaction is S-ubiquitinyl-[E2 ubiquitin-conjugating enzyme]-L-cysteine + [acceptor protein]-L-lysine = [E2 ubiquitin-conjugating enzyme]-L-cysteine + N(6)-ubiquitinyl-[acceptor protein]-L-lysine.. It participates in protein modification; protein ubiquitination. Its function is as follows. E3 ubiquitin-protein ligase which ubiquitinates histone H3 at 'Lys-14'. Required for male fertility, via inhibition of SPOP-mediated BRDT degradation when in the presence of acetylated histone H4 in early condensing spermatids. Stabilization of BRDT allows it to facilitate histone removal in early condensing spermatids and promote the progression of histone-to-protamine exchange. Promotes the expression of steroidogenesis proteins in the testes, and as a result plays a role in maintaining testosterone levels and repressing osteoclastogenesis. Promotes transcription of cardiac enhancer genes by facilitating binding of cardiac transcription factors such as MEF2C and GATA4 to target gene promoters. Ubiquitinates histone H4. Ubiquitinates histone H2A and H3 as part of the nucleosome core particle. This chain is E3 ubiquitin-protein ligase PHF7, found in Rattus norvegicus (Rat).